The primary structure comprises 441 residues: Histidinol dehydrogenase (441 aa).

Residues tyrosine 136, glutamine 197, and asparagine 220 each coordinate NAD(+). Residues serine 243, glutamine 265, and histidine 268 each coordinate substrate. 2 residues coordinate Zn(2+): glutamine 265 and histidine 268. Catalysis depends on proton acceptor residues glutamate 333 and histidine 334. Substrate contacts are provided by histidine 334, aspartate 367, glutamate 421, and histidine 426. Aspartate 367 contacts Zn(2+). Histidine 426 is a Zn(2+) binding site.

Belongs to the histidinol dehydrogenase family. It depends on Zn(2+) as a cofactor.

The enzyme catalyses L-histidinol + 2 NAD(+) + H2O = L-histidine + 2 NADH + 3 H(+). It functions in the pathway amino-acid biosynthesis; L-histidine biosynthesis; L-histidine from 5-phospho-alpha-D-ribose 1-diphosphate: step 9/9. Catalyzes the sequential NAD-dependent oxidations of L-histidinol to L-histidinaldehyde and then to L-histidine. This is Histidinol dehydrogenase from Pseudomonas putida (strain ATCC 47054 / DSM 6125 / CFBP 8728 / NCIMB 11950 / KT2440).